A 340-amino-acid polypeptide reads, in one-letter code: Phosphoribosylformylglycinamidine cyclo-ligase (340 aa).

Belongs to the AIR synthase family.

It localises to the cytoplasm. It carries out the reaction 2-formamido-N(1)-(5-O-phospho-beta-D-ribosyl)acetamidine + ATP = 5-amino-1-(5-phospho-beta-D-ribosyl)imidazole + ADP + phosphate + H(+). It functions in the pathway purine metabolism; IMP biosynthesis via de novo pathway; 5-amino-1-(5-phospho-D-ribosyl)imidazole from N(2)-formyl-N(1)-(5-phospho-D-ribosyl)glycinamide: step 2/2. The sequence is that of Phosphoribosylformylglycinamidine cyclo-ligase from Lactococcus lactis subsp. cremoris (strain MG1363).